A 506-amino-acid polypeptide reads, in one-letter code: MNALTLTPGALTLKQLRGVWRHPTPLVLDENAHEAINQSVACVEAIVAEDRTAYGINTGFGLLAQTRIATHDLENLQRSLVLSHAAGVGAPLDDNMVRLMMVLKINSLARGFSGIRLSVIQALIALVNAQVYPWIPSKGSVGASGDLAPLAHMSLLLLGEGKARWQGEWLPAKDALKKAGLEPITLAAKEGLALLNGTQASTAFALRGLFEAEDLFASAVVCGALTTEAVLGSRSPFDARIHAVRGQRGQIDAAAMYRHVLTDTSEIADSHHNCDKVQDPYSLRCQPQVMGACLTQLRHAAEVLLVESNAVSDNPLVFAEQNEVVSGGNFHAEPVAMAADNLALAIAEIGALSERRIALMMDKHMSQLPPFLVRNGGVNSGFMIAQVTAAALASENKALSHPHSVDSLPTSANQEDHVSMAPAAGRRLWEMASNTRGVLAVEWLAAVQGIDLREGLKSSPLLEQARQTLREAVSHYDDDRFFAPDIEKAMELLDDGRLVALLPPVL.

The segment at residues Ala-143 to Gly-145 is a cross-link (5-imidazolinone (Ala-Gly)). 2,3-didehydroalanine (Ser) is present on Ser-144.

This sequence belongs to the PAL/histidase family. In terms of processing, contains an active site 4-methylidene-imidazol-5-one (MIO), which is formed autocatalytically by cyclization and dehydration of residues Ala-Ser-Gly.

Its subcellular location is the cytoplasm. The enzyme catalyses L-histidine = trans-urocanate + NH4(+). The protein operates within amino-acid degradation; L-histidine degradation into L-glutamate; N-formimidoyl-L-glutamate from L-histidine: step 1/3. The protein is Histidine ammonia-lyase of Enterobacter sp. (strain 638).